The chain runs to 594 residues: Alanine--tRNA ligase (594 aa).

4 residues coordinate Zn(2+): histidine 456, histidine 460, cysteine 558, and histidine 562.

Belongs to the class-II aminoacyl-tRNA synthetase family. Zn(2+) serves as cofactor.

The protein resides in the cytoplasm. It carries out the reaction tRNA(Ala) + L-alanine + ATP = L-alanyl-tRNA(Ala) + AMP + diphosphate. Its function is as follows. Catalyzes the attachment of alanine to tRNA(Ala) in a two-step reaction: alanine is first activated by ATP to form Ala-AMP and then transferred to the acceptor end of tRNA(Ala). Also edits incorrectly charged Ser-tRNA(Ala) and Gly-tRNA(Ala) via its editing domain. This Borrelia garinii subsp. bavariensis (strain ATCC BAA-2496 / DSM 23469 / PBi) (Borreliella bavariensis) protein is Alanine--tRNA ligase (alaS).